A 275-amino-acid chain; its full sequence is Large ribosomal subunit protein uL2 (275 aa).

The segment at 227-261 is disordered; sequence PVDHPHGGGEAKSGQGNPHPVTPWGVPTKGYKTRK.

Belongs to the universal ribosomal protein uL2 family. Part of the 50S ribosomal subunit. Forms a bridge to the 30S subunit in the 70S ribosome.

In terms of biological role, one of the primary rRNA binding proteins. Required for association of the 30S and 50S subunits to form the 70S ribosome, for tRNA binding and peptide bond formation. It has been suggested to have peptidyltransferase activity; this is somewhat controversial. Makes several contacts with the 16S rRNA in the 70S ribosome. This is Large ribosomal subunit protein uL2 from Xylella fastidiosa (strain M23).